Consider the following 92-residue polypeptide: Cell division topological specificity factor (92 aa).

It belongs to the MinE family.

Prevents the cell division inhibition by proteins MinC and MinD at internal division sites while permitting inhibition at polar sites. This ensures cell division at the proper site by restricting the formation of a division septum at the midpoint of the long axis of the cell. This is Cell division topological specificity factor from Symbiobacterium thermophilum (strain DSM 24528 / JCM 14929 / IAM 14863 / T).